A 382-amino-acid chain; its full sequence is MSTYTRPVMLLLSGLLLLTLAIAVLNTLVPLWLAQEHMSTWQVGVVSSSYFTGNLVGTLLTGYVIKRIGFNRSYYLSSFIFAAGCAGLGLMIGFWSWLAWRFVAGVGCAMIWVVVESALMCSGTSRNRGRLLAAYMMVYYVGTFLGQLLVSKVSTELMSVLPWVTGLTLAGILPLLFTRVLNQQAENHDSTSITAMLKLRQARLGVNGCIISGIVLGSLYGLMPLYLNHKGVSNASIGFWMAVLVSAGILGQWPIGRLADKFGRLLVLRVQVFVVILGSIAMLSQAAMAPALFILGAAGFTLYPVAMAWACEKVEHHQLVAMNQALLLSYTVGSLLGPSFSAMLMQNFSDNLLFIMIASVSFIYLLMLLRNAGHTPKPVAHV.

The next 12 helical transmembrane spans lie at 14–34 (GLLLLTLAIAVLNTLVPLWLA), 45–65 (VVSSSYFTGNLVGTLLTGYVI), 79–99 (FIFAAGCAGLGLMIGFWSWLA), 102–122 (FVAGVGCAMIWVVVESALMCS), 131–151 (LLAAYMMVYYVGTFLGQLLVS), 157–177 (LMSVLPWVTGLTLAGILPLLF), 204–224 (LGVNGCIISGIVLGSLYGLMP), 235–255 (ASIGFWMAVLVSAGILGQWPI), 270–290 (VQVFVVILGSIAMLSQAAMAP), 291–311 (ALFILGAAGFTLYPVAMAWAC), 325–345 (ALLLSYTVGSLLGPSFSAMLM), and 348–368 (FSDNLLFIMIASVSFIYLLML).

The protein belongs to the major facilitator superfamily. YcaD (TC 2.A.1.26) family.

It localises to the cell inner membrane. This is an uncharacterized protein from Shigella flexneri serotype 5b (strain 8401).